The primary structure comprises 452 residues: Retrograde protein of 51 kDa (452 aa).

The segment covering 1-13 (MQKGAKIEDEGRQ) has biased composition (basic and acidic residues). A disordered region spans residues 1-50 (MQKGAKIEDEGRQSRIQSRNFIIQRSDPRTRGSSVYSSRSSSYNVRSSIS). The head stretch occupies residues 1-75 (MQKGAKIEDE…KGNREKEKRE (75 aa)). A compositionally biased stretch (polar residues) spans 14–23 (SRIQSRNFII). Positions 33 to 50 (SSVYSSRSSSYNVRSSIS) are enriched in low complexity. The region spanning 72 to 424 (EKREMQNLNE…KLLEGEESRV (353 aa)) is the IF rod domain. The interval 76-111 (MQNLNERLASYIEKVHFLDAQVKKLEAENEALRNRK) is coil 1A. Positions 112–121 (VEDLQPIRDA) are linker 1. The segment at 122-259 (YENELRQARK…DLLDQLELLK (138 aa)) is coil 1B. Ser-156 carries the sulfoserine modification. Residues 260 to 278 (PEPIQIKGMDYADFWKSEL) form a linker 12 region. Positions 279–424 (AKCVREINLA…KLLEGEESRV (146 aa)) are coil 2. The tail stretch occupies residues 425 to 452 (GLRTLVEQAIGTQSKGSASLKDAIQSSS).

The protein belongs to the intermediate filament family.

This is Retrograde protein of 51 kDa (RGP51) from Lymnaea stagnalis (Great pond snail).